Here is a 59-residue protein sequence, read N- to C-terminus: Large ribosomal subunit protein bL32 (59 aa).

The protein belongs to the bacterial ribosomal protein bL32 family.

The chain is Large ribosomal subunit protein bL32 from Mycoplasma capricolum subsp. capricolum (strain California kid / ATCC 27343 / NCTC 10154).